Here is a 505-residue protein sequence, read N- to C-terminus: Lysine--tRNA ligase (505 aa).

Residues Glu415 and Glu422 each contribute to the Mg(2+) site.

Belongs to the class-II aminoacyl-tRNA synthetase family. In terms of assembly, homodimer. The cofactor is Mg(2+).

It localises to the cytoplasm. The enzyme catalyses tRNA(Lys) + L-lysine + ATP = L-lysyl-tRNA(Lys) + AMP + diphosphate. The chain is Lysine--tRNA ligase from Pectobacterium atrosepticum (strain SCRI 1043 / ATCC BAA-672) (Erwinia carotovora subsp. atroseptica).